Consider the following 248-residue polypeptide: Proteasome subunit alpha (248 aa).

N-acetylserine; partial is present on Ser2.

This sequence belongs to the peptidase T1A family. In terms of assembly, the 20S proteasome core is composed of 14 alpha and 14 beta subunits that assemble into four stacked heptameric rings, resulting in a barrel-shaped structure. The two inner rings, each composed of seven catalytic beta subunits, are sandwiched by two outer rings, each composed of seven alpha subunits. The catalytic chamber with the active sites is on the inside of the barrel. Has a gated structure, the ends of the cylinder being occluded by the N-termini of the alpha-subunits. Is capped by the proteasome-associated ATPase, ARC.

It localises to the cytoplasm. It participates in protein degradation; proteasomal Pup-dependent pathway. Its activity is regulated as follows. The formation of the proteasomal ATPase ARC-20S proteasome complex, likely via the docking of the C-termini of ARC into the intersubunit pockets in the alpha-rings, may trigger opening of the gate for substrate entry. Interconversion between the open-gate and close-gate conformations leads to a dynamic regulation of the 20S proteasome proteolysis activity. In terms of biological role, component of the proteasome core, a large protease complex with broad specificity involved in protein degradation. The sequence is that of Proteasome subunit alpha from Mycobacterium tuberculosis (strain CDC 1551 / Oshkosh).